We begin with the raw amino-acid sequence, 569 residues long: Glutamine--tRNA ligase (569 aa).

The interval 1–23 (MSKDPMSKPTPEPAAHSKAGPAV) is disordered. Positions 50-60 (PEPNGYLHIGH) match the 'HIGH' region motif. ATP contacts are provided by residues 51-53 (EPN) and 57-63 (HIGHAKS). Residues D83 and Y228 each coordinate L-glutamine. Residues T247 and 277-278 (RL) contribute to the ATP site. The 'KMSKS' region signature appears at 284–288 (ITSKR).

Belongs to the class-I aminoacyl-tRNA synthetase family. As to quaternary structure, monomer.

Its subcellular location is the cytoplasm. The enzyme catalyses tRNA(Gln) + L-glutamine + ATP = L-glutaminyl-tRNA(Gln) + AMP + diphosphate. The sequence is that of Glutamine--tRNA ligase from Pseudomonas syringae pv. tomato (strain ATCC BAA-871 / DC3000).